Here is a 95-residue protein sequence, read N- to C-terminus: Nickel and cobalt resistance protein CnrY (95 aa).

At 1 to 45 (MADVEEWLTHARKVTQEASIGVDVTSIQECISAEPAQRVLVARRD) the chain is on the cytoplasmic side. Residues 46 to 68 (AWRAICCAAFAALVAFAAINRVA) traverse the membrane as a helical segment. The Periplasmic segment spans residues 69 to 95 (TIMLEKPAPTWVATPSAASPFGLLIGK).

The protein to A.xylosoxydans NccY.

It is found in the cell inner membrane. Functionally, nickel and cobalt resistance proteins CnrA, CnrB, CnrC CnrH and CnrR may be involved in the regulation of CNR. CnrH alone is able to activate cnr expression, and both CnrY and CrnX are needed for nickel induction of CnrH. In the absence of wild-type CnrY (due either to a frameshift, PubMed:10671463 or absence of the transcript, PubMed:10671464), nickel and cobalt resistance is constitutive, indicating that CrnY may act as a repressor or an anti-sigma factor. The chain is Nickel and cobalt resistance protein CnrY (cnrY) from Cupriavidus metallidurans (strain ATCC 43123 / DSM 2839 / NBRC 102507 / CH34) (Ralstonia metallidurans).